The primary structure comprises 254 residues: Small ribosomal subunit protein mS40 (254 aa).

The transit peptide at 1–33 (MAAPLRHTLLKLVPTLLRSSYVAQVPLQTLCTR) directs the protein to the mitochondrion. Position 47 is a phosphoserine (Ser-47). The tract at residues 218–254 (YQGNLLEESGPPPESMPEMPTTPPAESSIEQPGSQSA) is disordered. Residues 227–240 (GPPPESMPEMPTTP) show a composition bias toward pro residues.

It belongs to the bacterial ribosomal protein bS18 family. Mitochondrion-specific ribosomal protein mS40 subfamily. In terms of assembly, component of the mitochondrial ribosome small subunit (28S) which comprises a 12S rRNA and about 30 distinct proteins.

The protein resides in the mitochondrion. The polypeptide is Small ribosomal subunit protein mS40 (Mrps18b) (Mus musculus (Mouse)).